The primary structure comprises 320 residues: GPI-specific phospholipase A2-like PGAP3 (320 aa).

A signal peptide spans 1–20; sequence MAGLAARLVLLAGAAALASG. Residues 21 to 98 are Lumenal-facing; the sequence is SQGDREPVYR…QFHGKWPFSR (78 aa). The N-linked (GlcNAc...) asparagine glycan is linked to Asn-40. Residues 99 to 119 traverse the membrane as a helical segment; it reads FLFFQEPASAVASFLNGLASL. The Cytoplasmic portion of the chain corresponds to 120–135; that stretch reads VMLCRYRTFVPASSPM. The chain crosses the membrane as a helical span at residues 136–156; that stretch reads YHTCVAFAWVSLNAWFWSTVF. At 157–169 the chain is on the lumenal side; sequence HTRDTDLTEKMDY. A helical transmembrane segment spans residues 170–190; it reads FCASTVILHSIYLCCVRTVGL. Residues 191-193 lie on the Cytoplasmic side of the membrane; that stretch reads QHP. The helical transmembrane segment at 194-214 threads the bilayer; it reads AVVSAFRALLLLMLTVHVSYL. Residues 215–224 are Lumenal-facing; it reads SLIRFDYGYN. A helical transmembrane segment spans residues 225–245; the sequence is LVANVAIGLVNVVWWLAWCLW. Residues 246–257 lie on the Cytoplasmic side of the membrane; that stretch reads NQRRLPHVRKCV. Residues 258–278 form a helical membrane-spanning segment; that stretch reads VVVLLLQGLSLLELLDFPPLF. Position 279 (Trp-279) is a topological domain, lumenal. Residues 280 to 299 traverse the membrane as a helical segment; sequence VLDAHAIWHISTIPVHVLFF. Residues 300–320 are Cytoplasmic-facing; the sequence is SFLEDDSLYLLKESEDKFKLD.

The protein belongs to the PGAP3 family. In terms of tissue distribution, ubiquitously expressed, with highest levels in thyroid and placenta.

It is found in the golgi apparatus membrane. Its function is as follows. Involved in the fatty acid remodeling steps of GPI-anchor maturation where the unsaturated acyl chain at sn-2 of inositol phosphate is replaced by a saturated stearoyl chain. May catalyze the first step of the fatty acid remodeling, by removing the unsaturated acyl chain at sn-2 of inositol phosphate, generating a lyso-GPI intermediate. The fatty acid remodeling steps is critical for the integration of GPI-APs into lipid rafts. The chain is GPI-specific phospholipase A2-like PGAP3 from Homo sapiens (Human).